The chain runs to 91 residues: MKFSIAAIALAAVAVASPVEMEPRTNPSTCNINGNNNGKVVCCNSLIPILGQILCNIAVLGSTCNAGQTVRCCETDANGGLINISLLNCVG.

An N-terminal signal peptide occupies residues methionine 1–alanine 16. Cystine bridges form between cysteine 30–cysteine 72, cysteine 42–cysteine 64, cysteine 43–cysteine 55, and cysteine 73–cysteine 89. Asparagine 83 carries an N-linked (GlcNAc...) asparagine glycan.

This sequence belongs to the fungal hydrophobin family.

The protein resides in the secreted. It is found in the cell wall. It localises to the vacuole. Its subcellular location is the cytoplasmic vesicle. Functionally, aerial growth, conidiation, and dispersal of filamentous fungi in the environment rely upon a capability of their secreting small amphipathic proteins called hydrophobins (HPBs) with low sequence identity. Class I can self-assemble into an outermost layer of rodlet bundles on aerial cell surfaces, conferring cellular hydrophobicity that supports fungal growth, development and dispersal; whereas Class II form highly ordered films at water-air interfaces through intermolecular interactions but contribute nothing to the rodlet structure. Hyd1E contributes to certain cell wall-related features, such as hydrophobicity but is not involved in cell wall-related events during fungal proliferation in host hemocoel. Does not contribute to conidial hydrophobicity. This Beauveria bassiana (strain ARSEF 2860) (White muscardine disease fungus) protein is Class I hydrophobin E.